We begin with the raw amino-acid sequence, 492 residues long: Aspartyl/glutamyl-tRNA(Asn/Gln) amidotransferase subunit B (492 aa).

It belongs to the GatB/GatE family. GatB subfamily. Heterotrimer of A, B and C subunits.

It catalyses the reaction L-glutamyl-tRNA(Gln) + L-glutamine + ATP + H2O = L-glutaminyl-tRNA(Gln) + L-glutamate + ADP + phosphate + H(+). It carries out the reaction L-aspartyl-tRNA(Asn) + L-glutamine + ATP + H2O = L-asparaginyl-tRNA(Asn) + L-glutamate + ADP + phosphate + 2 H(+). Its function is as follows. Allows the formation of correctly charged Asn-tRNA(Asn) or Gln-tRNA(Gln) through the transamidation of misacylated Asp-tRNA(Asn) or Glu-tRNA(Gln) in organisms which lack either or both of asparaginyl-tRNA or glutaminyl-tRNA synthetases. The reaction takes place in the presence of glutamine and ATP through an activated phospho-Asp-tRNA(Asn) or phospho-Glu-tRNA(Gln). This is Aspartyl/glutamyl-tRNA(Asn/Gln) amidotransferase subunit B from Dehalococcoides mccartyi (strain CBDB1).